Consider the following 316-residue polypeptide: HTH-type transcriptional regulator cbl (316 aa).

Residues 1–59 (MNFQQLKIIREAARQDYNLTEVANMLFTSQSGVSRHIRELEDELGIEIFVRRGKRLLGM) form the HTH lysR-type domain. The H-T-H motif DNA-binding region spans 19 to 38 (LTEVANMLFTSQSGVSRHIR).

The protein belongs to the LysR transcriptional regulatory family.

Its function is as follows. May be an accessory regulatory protein within the cys regulon. This is HTH-type transcriptional regulator cbl (cbl) from Escherichia coli (strain K12).